The following is a 103-amino-acid chain: Potassium voltage-gated channel subfamily E member 3 (103 aa).

3 N-linked (GlcNAc...) asparagine glycosylation sites follow: Asn5, Asn22, and Asn41. Residues 32–53 (RPGPGLGPDNQTEERRASLPGR) form a disordered region. Residues 43 to 53 (TEERRASLPGR) are compositionally biased toward basic and acidic residues. The chain crosses the membrane as a helical span at residues 57–77 (SYMYILFVMFLFAVTVGSLIL). Residues 68–79 (FAVTVGSLILGY) are interaction with KCNQ1. Residues 78-103 (GYTRSRKVDKRSDPYHVYIKNRVSMI) are Cytoplasmic-facing.

The protein belongs to the potassium channel KCNE family. As to quaternary structure, interacts with KCNB1. Interacts with KCNC2. Associates with KCNC4/Kv3.4. Interacts with KCNQ1; associates with a KCNQ1:KCNE3 stoichiometry of 4:4; produces a current with nearly instantaneous activation with a linear current-voltage relationship and alters membrane raft localization; affects KCNQ1 structure and gating properties. In terms of tissue distribution, expressed in hippocampal neurons (at protein level). Widely expressed with highest levels in kidney and moderate levels in small intestine.

The protein localises to the cell membrane. It is found in the cytoplasm. It localises to the perikaryon. The protein resides in the cell projection. Its subcellular location is the dendrite. The protein localises to the membrane raft. Functionally, ancillary protein that functions as a regulatory subunit of the voltage-gated potassium (Kv) channel complex composed of pore-forming and potassium-conducting alpha subunits and of regulatory beta subunits. KCNE3 beta subunit modulates the gating kinetics and enhances stability of the channel complex. Alters the gating of the delayed rectifier Kv channel containing KCNB1 alpha subunit. Associates with KCNC4/Kv3.4 alpha subunit to form the subthreshold Kv channel in skeletal muscle and to establish the resting membrane potential (RMP) in muscle cells. Association with KCNQ1/KCLQT1 alpha subunit may form the intestinal cAMP-stimulated potassium channel involved in chloride secretion that produces a current with nearly instantaneous activation with a linear current-voltage relationship. In Homo sapiens (Human), this protein is Potassium voltage-gated channel subfamily E member 3.